The chain runs to 89 residues: Small ribosomal subunit protein uS15 (89 aa).

It belongs to the universal ribosomal protein uS15 family. In terms of assembly, part of the 30S ribosomal subunit. Forms a bridge to the 50S subunit in the 70S ribosome, contacting the 23S rRNA.

Functionally, one of the primary rRNA binding proteins, it binds directly to 16S rRNA where it helps nucleate assembly of the platform of the 30S subunit by binding and bridging several RNA helices of the 16S rRNA. Forms an intersubunit bridge (bridge B4) with the 23S rRNA of the 50S subunit in the ribosome. The chain is Small ribosomal subunit protein uS15 from Mycobacterium marinum (strain ATCC BAA-535 / M).